The primary structure comprises 200 residues: Methylthioribulose-1-phosphate dehydratase-like protein (200 aa).

It belongs to the aldolase class II family. MtnB subfamily.

In Schizosaccharomyces pombe (strain 972 / ATCC 24843) (Fission yeast), this protein is Methylthioribulose-1-phosphate dehydratase-like protein.